Consider the following 219-residue polypeptide: Large ribosomal subunit protein uL3 (219 aa).

The protein belongs to the universal ribosomal protein uL3 family. Part of the 50S ribosomal subunit. Forms a cluster with proteins L14 and L19.

Functionally, one of the primary rRNA binding proteins, it binds directly near the 3'-end of the 23S rRNA, where it nucleates assembly of the 50S subunit. In Salinispora tropica (strain ATCC BAA-916 / DSM 44818 / JCM 13857 / NBRC 105044 / CNB-440), this protein is Large ribosomal subunit protein uL3.